The sequence spans 587 residues: Heavy metal-associated isoprenylated plant protein 33 (587 aa).

An HMA domain is found at 9–72 (IQTCVLKVNI…KLLKSGKHAE (64 aa)). The a metal cation site is built by Cys-20 and Cys-23. Disordered stretches follow at residues 98-146 (QIDH…MVIP), 176-261 (LKLP…KPMM), 287-449 (AHKN…PMSN), 462-504 (PGGG…QQQQ), and 532-587 (YARP…CNIM). Gly residues-rich tracts occupy residues 104–113 (KGGGGGGGGP) and 121–140 (KIGG…GGGP). The span at 194-208 (PMNKNPQMPNNPNQK) shows a compositional bias: low complexity. Positions 215–248 (PDDDDEEDFSDEFDDEFDEDDDEFDDDLEDDEFD) are enriched in acidic residues. Gly residues-rich tracts occupy residues 290 to 300 (NGGGPGPAGGK), 312 to 419 (MGGG…GGGP), and 428 to 445 (GAMG…GGPG). Residues 471–483 (SAEAPPGYFQGQV) show a composition bias toward low complexity. Pro residues-rich tracts occupy residues 534 to 547 (RPPP…PQPQ) and 554 to 565 (YPYPYPYPPQYP). Residues 578-587 (DENTSSCNIM) are compositionally biased toward polar residues. The residue at position 584 (Cys-584) is a Cysteine methyl ester. Cys-584 is lipidated: S-farnesyl cysteine. A propeptide spans 585–587 (NIM) (removed in mature form).

Belongs to the HIPP family.

Functionally, heavy-metal-binding protein. This chain is Heavy metal-associated isoprenylated plant protein 33, found in Arabidopsis thaliana (Mouse-ear cress).